The chain runs to 861 residues: Major vault protein (861 aa).

Residue Ala-2 is modified to N-acetylalanine. MVP repeat units follow at residues 2 to 56 (ATEE…VPPR), 57 to 111 (HYCI…DITP), 112 to 164 (LQVV…EIIQ), 165 to 217 (ATVI…DLVD), 218 to 272 (AVIL…GVVP), 273 to 323 (ITTL…IQDV), 324 to 379 (YVLS…ERQA), 380 to 457 (IPLD…KTRV), and 458 to 520 (VSYR…LLGP). Residue Ser-421 is modified to Phosphoserine. Lys-444 is covalently cross-linked (Glycyl lysine isopeptide (Lys-Gly) (interchain with G-Cter in SUMO2)). Residue Lys-704 forms a Glycyl lysine isopeptide (Lys-Gly) (interchain with G-Cter in SUMO2) linkage.

In terms of assembly, the vault ribonucleoprotein particle is a huge (400 A x 670 A) cage structure of 12.9 MDa. It consists of a dimer of half-vaults, with each half-vault comprising 39 identical major vault protein (MVP) chains, PARP4 and one or more vault RNAs (vRNAs). Interacts with PTEN and activated MAPK1. The phosphorylated protein interacts with the SH2 domains of PTPN11 and SRC. Interacts with APEX1. May interact with ZNF540. Interacts with TEP1. Phosphorylated on Tyr residues after EGF stimulation. In terms of processing, dephosphorylated by PTPN11.

It is found in the cytoplasm. Its subcellular location is the nucleus. Functionally, required for normal vault structure. Vaults are multi-subunit structures that may act as scaffolds for proteins involved in signal transduction. Vaults may also play a role in nucleo-cytoplasmic transport. Down-regulates IFNG-mediated STAT1 signaling and subsequent activation of JAK. Down-regulates SRC activity and signaling through MAP kinases. The protein is Major vault protein (Mvp) of Mus musculus (Mouse).